The sequence spans 98 residues: Cystatin-A (98 aa).

Met-1 bears the N-acetylmethionine mark. The short motif at 46–50 (QVVAG) is the Secondary area of contact element.

Belongs to the cystatin family.

It is found in the cytoplasm. Functionally, this is an intracellular thiol proteinase inhibitor. The polypeptide is Cystatin-A (CSTA) (Felis catus (Cat)).